The following is a 122-amino-acid chain: Large ribosomal subunit protein bL12 (122 aa).

The protein belongs to the bacterial ribosomal protein bL12 family. Homodimer. Part of the ribosomal stalk of the 50S ribosomal subunit. Forms a multimeric L10(L12)X complex, where L10 forms an elongated spine to which 2 to 4 L12 dimers bind in a sequential fashion. Binds GTP-bound translation factors.

Forms part of the ribosomal stalk which helps the ribosome interact with GTP-bound translation factors. Is thus essential for accurate translation. This is Large ribosomal subunit protein bL12 from Xylella fastidiosa (strain M12).